We begin with the raw amino-acid sequence, 225 residues long: Octanoyltransferase (225 aa).

Residues 42 to 219 (KNRQASMIFC…SICSALEYIN (178 aa)) enclose the BPL/LPL catalytic domain. Residues 79–86 (RGGKITWH), 149–151 (AIG), and 162–164 (GFA) contribute to the substrate site. Cysteine 180 serves as the catalytic Acyl-thioester intermediate.

The protein belongs to the LipB family.

The protein resides in the cytoplasm. It carries out the reaction octanoyl-[ACP] + L-lysyl-[protein] = N(6)-octanoyl-L-lysyl-[protein] + holo-[ACP] + H(+). It functions in the pathway protein modification; protein lipoylation via endogenous pathway; protein N(6)-(lipoyl)lysine from octanoyl-[acyl-carrier-protein]: step 1/2. Functionally, catalyzes the transfer of endogenously produced octanoic acid from octanoyl-acyl-carrier-protein onto the lipoyl domains of lipoate-dependent enzymes. Lipoyl-ACP can also act as a substrate although octanoyl-ACP is likely to be the physiological substrate. The sequence is that of Octanoyltransferase from Tropheryma whipplei (strain TW08/27) (Whipple's bacillus).